Consider the following 458-residue polypeptide: Methylenetetrahydrofolate--tRNA-(uracil-5-)-methyltransferase TrmFO (458 aa).

12 to 17 (GAGLAG) lines the FAD pocket.

It belongs to the MnmG family. TrmFO subfamily. It depends on FAD as a cofactor.

The protein resides in the cytoplasm. It carries out the reaction uridine(54) in tRNA + (6R)-5,10-methylene-5,6,7,8-tetrahydrofolate + NADH + H(+) = 5-methyluridine(54) in tRNA + (6S)-5,6,7,8-tetrahydrofolate + NAD(+). The catalysed reaction is uridine(54) in tRNA + (6R)-5,10-methylene-5,6,7,8-tetrahydrofolate + NADPH + H(+) = 5-methyluridine(54) in tRNA + (6S)-5,6,7,8-tetrahydrofolate + NADP(+). In terms of biological role, catalyzes the folate-dependent formation of 5-methyl-uridine at position 54 (M-5-U54) in all tRNAs. The protein is Methylenetetrahydrofolate--tRNA-(uracil-5-)-methyltransferase TrmFO of Deinococcus geothermalis (strain DSM 11300 / CIP 105573 / AG-3a).